We begin with the raw amino-acid sequence, 136 residues long: Regulator of nucleoside diphosphate kinase (136 aa).

It belongs to the Rnk family. As to quaternary structure, interacts with the RNA polymerase.

In terms of biological role, may act as an anti-Gre factor. The polypeptide is Regulator of nucleoside diphosphate kinase (Escherichia coli O6:H1 (strain CFT073 / ATCC 700928 / UPEC)).